The chain runs to 281 residues: Apolipoprotein Eb (281 aa).

The signal sequence occupies residues 1-18; it reads MRSLVVFFALAVLTGCQA. The propeptide occupies 19-24; the sequence is RSLFQA. The segment at 34–66 is 3 X approximate tandem repeats; sequence MVDRFWQYVSELNTQTDGMVQNIKGSQLSRELD. Repeat copies occupy residues 67–88, 89–110, 111–132, 133–154, 155–176, 177–199, 200–227, 228–249, and 254–281. The interval 67–281 is 9 X 22 AA approximate tandem repeats; that stretch reads TLITDTMAEL…EATAALPTQA (215 aa).

Belongs to the apolipoprotein A1/A4/E family. As to quaternary structure, homotetramer.

The protein resides in the secreted. It localises to the extracellular space. It is found in the extracellular matrix. APOE is an apolipoprotein, a protein associating with lipid particles, that mainly functions in lipoprotein-mediated lipid transport between organs via the plasma and interstitial fluids. APOE is a core component of plasma lipoproteins and is involved in their production, conversion and clearance. Apolipoproteins are amphipathic molecules that interact both with lipids of the lipoprotein particle core and the aqueous environment of the plasma. The chain is Apolipoprotein Eb (apoeb) from Danio rerio (Zebrafish).